A 333-amino-acid polypeptide reads, in one-letter code: Phosphate acyltransferase (333 aa).

The protein belongs to the PlsX family. Homodimer. Probably interacts with PlsY.

The protein resides in the cytoplasm. It catalyses the reaction a fatty acyl-[ACP] + phosphate = an acyl phosphate + holo-[ACP]. Its pathway is lipid metabolism; phospholipid metabolism. In terms of biological role, catalyzes the reversible formation of acyl-phosphate (acyl-PO(4)) from acyl-[acyl-carrier-protein] (acyl-ACP). This enzyme utilizes acyl-ACP as fatty acyl donor, but not acyl-CoA. The polypeptide is Phosphate acyltransferase (Pelagibacter ubique (strain HTCC1062)).